Reading from the N-terminus, the 399-residue chain is Tyrosine--tRNA ligase (399 aa).

Residues 42 to 51 (PTAPDLHLGH) carry the 'HIGH' region motif. Residues 226-230 (KMSKS) carry the 'KMSKS' region motif. Lysine 229 is an ATP binding site. Residues 337–398 (LPVFQVVKQA…GKRKFASVVL (62 aa)) enclose the S4 RNA-binding domain.

The protein belongs to the class-I aminoacyl-tRNA synthetase family. TyrS type 2 subfamily. As to quaternary structure, homodimer.

It localises to the cytoplasm. The enzyme catalyses tRNA(Tyr) + L-tyrosine + ATP = L-tyrosyl-tRNA(Tyr) + AMP + diphosphate + H(+). In terms of biological role, catalyzes the attachment of tyrosine to tRNA(Tyr) in a two-step reaction: tyrosine is first activated by ATP to form Tyr-AMP and then transferred to the acceptor end of tRNA(Tyr). The chain is Tyrosine--tRNA ligase from Aromatoleum aromaticum (strain DSM 19018 / LMG 30748 / EbN1) (Azoarcus sp. (strain EbN1)).